Consider the following 308-residue polypeptide: Oxygen-dependent coproporphyrinogen-III oxidase (308 aa).

Residue Ser-100 participates in substrate binding. 2 residues coordinate a divalent metal cation: His-104 and His-114. His-114 functions as the Proton donor in the catalytic mechanism. 116–118 serves as a coordination point for substrate; that stretch reads NFR. 2 residues coordinate a divalent metal cation: His-153 and His-183. The tract at residues 248-283 is important for dimerization; it reads YVEFNLVFDRGTIFGLQSGGRTESILSSMPPMATWK. 266 to 268 serves as a coordination point for substrate; the sequence is GGR.

The protein belongs to the aerobic coproporphyrinogen-III oxidase family. As to quaternary structure, homodimer. It depends on a divalent metal cation as a cofactor.

The protein resides in the cytoplasm. The catalysed reaction is coproporphyrinogen III + O2 + 2 H(+) = protoporphyrinogen IX + 2 CO2 + 2 H2O. The protein operates within porphyrin-containing compound metabolism; protoporphyrin-IX biosynthesis; protoporphyrinogen-IX from coproporphyrinogen-III (O2 route): step 1/1. Functionally, involved in the heme biosynthesis. Catalyzes the aerobic oxidative decarboxylation of propionate groups of rings A and B of coproporphyrinogen-III to yield the vinyl groups in protoporphyrinogen-IX. This Francisella tularensis subsp. mediasiatica (strain FSC147) protein is Oxygen-dependent coproporphyrinogen-III oxidase.